Here is a 1093-residue protein sequence, read N- to C-terminus: MADIIERIRSQDEYREFYELATKIRNQKLLTDAELHSLNRHQQEVSDNEIKLLTEAWRSSYWNNVGRQLKNQALEPTIACRLLKEISETEALPAYKHVGHHFSTLDQLLTILYNEPQSVAELLNSIDRNDITSNDSTIQVLFHLVYSCALYPEDELKIAQVVCNLLKLQLYRSGSEMRTILRKETSISTRFYKHFVELIHPTMVYLTKALRKGVLDVIQLGSFWLDIDAKQSTARFLRDNKQNEDRLPEYRALVVSKLVDFVDTFLENISKALPMLPPNLNWIIRDIFCSLYEVVDDVSAIELSHACKDMIVSNLICPAIISPQKFGVVDNDVRVGTIVNHNLVQIAMIIQMISLREFESPPEEYKEFLSQCRNTHLISEMMDALLVEKLAPDVEITSLIANGTAESDMATKSSFVGTVADVNVLIKIIRNAPSTSDAKLSRILSVCDKLPATISSTTQKSHFDNLEASPKISTLRNIHRKVQHSFKRTGDSFNDINELGAKQGEALAFGKENFDLFYLEYSPKNYKDVAEADRLKKKAEERRQLADLEKLLEPTPAPKETPVENNLIDFSSGSAETNSEHLSDSTSVSPEPLTSTEELQIGDQGVGGEQRGKLAKLKSLSDRMKKGITQSNTLSDIREHLRRSGSFVKPPPSGIPTSSSEQNLPDVATGPRDDILAKYASISSIKEQKPALGNLIDGTASASSTPRKEPLEPYYSSENLVGCRAFQDTLRKMITVLGNISYLPRIGYRNETKQNEWDKKVLLGRFLDGVLVETEHRREYGLAAQLREVKRCIELFEHAGVEILMDHLKLNEAEQDKIVNGMREERASLMRKSNDISSLEQRVLLNRRLTEQILVDFLMRTFLETGFNNKHTVGKTQEVTAVLKFYDEFKYLRAQDERAEFLKNLLTFLRDRLMQNVDWNFATDTMMSRAMTTIERYVIFAVYDNAFYPNRDADHHRDKLLRGTIAKVSDVVTPVNDFLKIPEHLHGEAPWPSAQAELSMLDIYVTAQDKLNCVVRCCDVINNLVALSSKNAVASADDLTPVLVFVIIKANPRALLSNVQFVETFAGDRIESGRDAYYWVNFKSAVEYIKTIL.

A Ras-GAP domain is found at 156 to 389 (LKIAQVVCNL…EMMDALLVEK (234 aa)). Disordered stretches follow at residues 547–610 (DLEK…GGEQ) and 643–669 (RSGS…DVAT). Polar residues-rich tracts occupy residues 568-577 (IDFSSGSAET) and 584-598 (DSTS…STEE). One can recognise a VPS9 domain in the interval 955–1093 (HHRDKLLRGT…SAVEYIKTIL (139 aa)).

It belongs to the GAPVD1 family. As to quaternary structure, interacts with GDP-bound rab-5. Interacts with alpha-adaptin.

The protein resides in the membrane. The protein localises to the cytoplasmic vesicle. It is found in the clathrin-coated vesicle. In terms of biological role, acts both as a GTPase-activating protein (GAP) and a guanine nucleotide exchange factor (GEF), and participates in endocytosis. Acts by regulating the activation of rab-5 by exchanging bound GDP for free GTP at clathrin coated pits. This Caenorhabditis elegans protein is Receptor-mediated endocytosis protein 6 (rme-6).